The following is a 491-amino-acid chain: Feruloyl-CoA synthase (491 aa).

Thr-154 lines the Mg(2+) pocket. Residues Ala-199, Gly-291, and Thr-295 each contribute to the ATP site. A Mg(2+)-binding site is contributed by Glu-296. Residues Asp-374 and Lys-391 each coordinate ATP.

The protein belongs to the ATP-dependent AMP-binding enzyme family. Mg(2+) serves as cofactor.

It carries out the reaction (E)-ferulate + ATP + CoA = (E)-feruloyl-CoA + AMP + diphosphate. Functionally, catalyzes the formation of (E)-feruloyl-CoA, AMP and diphosphate from (E)-ferulate, CoA and ATP. Involved in the degradation pathway of lignin-derived aromatic compounds of plant cell walls. Catalyzes the first enzymatic step in the conversion of ferulic acid into high value compound vanillin. This chain is Feruloyl-CoA synthase, found in Amycolatopsis sp.